Consider the following 956-residue polypeptide: UvrABC system protein A (956 aa).

Gly-33–Ser-40 lines the ATP pocket. A C4-type zinc finger spans residues Cys-252 to Cys-279. 2 ABC transporter domains span residues Trp-309–Ile-587 and Gly-607–Lys-936. Gly-639–Ser-646 is a binding site for ATP. Residues Cys-738–Cys-764 form a C4-type zinc finger.

This sequence belongs to the ABC transporter superfamily. UvrA family. As to quaternary structure, forms a heterotetramer with UvrB during the search for lesions.

It localises to the cytoplasm. Its function is as follows. The UvrABC repair system catalyzes the recognition and processing of DNA lesions. UvrA is an ATPase and a DNA-binding protein. A damage recognition complex composed of 2 UvrA and 2 UvrB subunits scans DNA for abnormalities. When the presence of a lesion has been verified by UvrB, the UvrA molecules dissociate. This Listeria monocytogenes serotype 4b (strain F2365) protein is UvrABC system protein A.